The following is a 277-amino-acid chain: Energy-coupling factor transporter ATP-binding protein EcfA1 (277 aa).

An ABC transporter domain is found at 5–240 (LEVENLVFKY…SEDMVEIGLD (236 aa)). ATP is bound at residue 40-47 (GQNGSGKS). E166 acts as the Proton acceptor in catalysis.

This sequence belongs to the ABC transporter superfamily. Energy-coupling factor EcfA family. Forms a stable energy-coupling factor (ECF) transporter complex composed of 2 membrane-embedded substrate-binding proteins (S component), 2 ATP-binding proteins (A component) and 2 transmembrane proteins (T component). In L.lactis forms a stable complex with EcfA' and EcfT and substrate-binding components. In E.coli forms a stable complex with EcfA', EcfT and individually with 3 tested substrate-binding components (BioY, NiaX and ThiT) with a stoichiometry of 1.1:1:1. The core ECF complex interacts with a number of substrate-specific binding components, including BioY, BioY2, HmpT, NiaX, PanT, QueT, RibU and ThiT.

It is found in the cell membrane. ATP-binding (A) component of a common energy-coupling factor (ECF) ABC-transporter complex. Unlike classic ABC transporters this ECF transporter provides the energy necessary to transport a number of different substrates. In this organism these probably include biotin, thiamine precursor, niacin, pantothenic acid, queuosine precursor, riboflavin and thiamine. Uptake of niacin or riboflavin into proteosomes containing EcfA1A2T and Niax or RibU has been demonstrated. Uptake requires hydrolyzable Mg-ATP and is substrate-specific; NiaX-containing proteosomes did not transport riboflavin. The sequence is that of Energy-coupling factor transporter ATP-binding protein EcfA1 from Lactococcus lactis subsp. cremoris (strain MG1363).